Here is a 147-residue protein sequence, read N- to C-terminus: Cyanate hydratase (147 aa).

Active-site residues include Arg88, Glu91, and Ser114.

This sequence belongs to the cyanase family.

The catalysed reaction is cyanate + hydrogencarbonate + 3 H(+) = NH4(+) + 2 CO2. Functionally, catalyzes the reaction of cyanate with bicarbonate to produce ammonia and carbon dioxide. The polypeptide is Cyanate hydratase (Methylibium petroleiphilum (strain ATCC BAA-1232 / LMG 22953 / PM1)).